Here is a 110-residue protein sequence, read N- to C-terminus: Large ribosomal subunit protein uL22 (110 aa).

The protein belongs to the universal ribosomal protein uL22 family. As to quaternary structure, part of the 50S ribosomal subunit.

Functionally, this protein binds specifically to 23S rRNA; its binding is stimulated by other ribosomal proteins, e.g. L4, L17, and L20. It is important during the early stages of 50S assembly. It makes multiple contacts with different domains of the 23S rRNA in the assembled 50S subunit and ribosome. The globular domain of the protein is located near the polypeptide exit tunnel on the outside of the subunit, while an extended beta-hairpin is found that lines the wall of the exit tunnel in the center of the 70S ribosome. In Shewanella frigidimarina (strain NCIMB 400), this protein is Large ribosomal subunit protein uL22.